A 294-amino-acid polypeptide reads, in one-letter code: UDP-3-O-acyl-N-acetylglucosamine deacetylase (294 aa).

The Zn(2+) site is built by H75, H232, and D236. H259 functions as the Proton donor in the catalytic mechanism.

Belongs to the LpxC family. It depends on Zn(2+) as a cofactor.

It catalyses the reaction a UDP-3-O-[(3R)-3-hydroxyacyl]-N-acetyl-alpha-D-glucosamine + H2O = a UDP-3-O-[(3R)-3-hydroxyacyl]-alpha-D-glucosamine + acetate. Its pathway is glycolipid biosynthesis; lipid IV(A) biosynthesis; lipid IV(A) from (3R)-3-hydroxytetradecanoyl-[acyl-carrier-protein] and UDP-N-acetyl-alpha-D-glucosamine: step 2/6. Functionally, catalyzes the hydrolysis of UDP-3-O-myristoyl-N-acetylglucosamine to form UDP-3-O-myristoylglucosamine and acetate, the committed step in lipid A biosynthesis. This is UDP-3-O-acyl-N-acetylglucosamine deacetylase from Campylobacter jejuni subsp. doylei (strain ATCC BAA-1458 / RM4099 / 269.97).